The sequence spans 257 residues: Glucosamine-6-phosphate deaminase (257 aa).

Residue Asp-64 is the Proton acceptor; for enolization step of the active site. Asn-133 acts as the For ring-opening step in catalysis. Catalysis depends on His-135, which acts as the Proton acceptor; for ring-opening step. The For ring-opening step role is filled by Glu-140.

The protein belongs to the glucosamine/galactosamine-6-phosphate isomerase family. NagB subfamily.

It catalyses the reaction alpha-D-glucosamine 6-phosphate + H2O = beta-D-fructose 6-phosphate + NH4(+). The protein operates within amino-sugar metabolism; N-acetylneuraminate degradation; D-fructose 6-phosphate from N-acetylneuraminate: step 5/5. In terms of biological role, catalyzes the reversible isomerization-deamination of glucosamine 6-phosphate (GlcN6P) to form fructose 6-phosphate (Fru6P) and ammonium ion. The polypeptide is Glucosamine-6-phosphate deaminase (Corynebacterium urealyticum (strain ATCC 43042 / DSM 7109)).